The chain runs to 436 residues: AMSH-like protease (436 aa).

Position 1 is an N-acetylmethionine (Met1). Ser25 and Ser242 each carry phosphoserine. The region spanning 269–397 (VVLSRDLCHK…IFRLTNAGML (129 aa)) is the MPN domain. Positions 347, 349, 360, 362, 402, 408, and 410 each coordinate Zn(2+). The JAMM motif motif lies at 347–360 (HTHPTQTAFLSSVD).

The protein belongs to the peptidase M67C family. The cofactor is Zn(2+). Ubiquitously expressed. Isoform 1 is widely expressed while isoform 2 is testis-specific.

Zinc metalloprotease that specifically cleaves 'Lys-63'-linked polyubiquitin chains. Acts as a positive regulator of the TORC1 signaling pathway by mediating 'Lys-63'-linked deubiquitination of SESN2, thereby inhibiting SESN2-interaction with the GATOR2 complex. Does not cleave 'Lys-48'-linked polyubiquitin chains. In Mus musculus (Mouse), this protein is AMSH-like protease (Stambpl1).